Reading from the N-terminus, the 382-residue chain is D-galactonate dehydratase (382 aa).

Position 183 (Asp-183) interacts with Mg(2+). His-185 functions as the Proton donor in the catalytic mechanism. Mg(2+) is bound by residues Glu-209 and Glu-235. The active-site Proton acceptor is the His-285.

The protein belongs to the mandelate racemase/muconate lactonizing enzyme family. GalD subfamily. The cofactor is Mg(2+).

It carries out the reaction D-galactonate = 2-dehydro-3-deoxy-D-galactonate + H2O. The protein operates within carbohydrate acid metabolism; D-galactonate degradation; D-glyceraldehyde 3-phosphate and pyruvate from D-galactonate: step 1/3. Functionally, catalyzes the dehydration of D-galactonate to 2-keto-3-deoxy-D-galactonate. This is D-galactonate dehydratase from Escherichia fergusonii (strain ATCC 35469 / DSM 13698 / CCUG 18766 / IAM 14443 / JCM 21226 / LMG 7866 / NBRC 102419 / NCTC 12128 / CDC 0568-73).